A 188-amino-acid polypeptide reads, in one-letter code: ATP synthase subunit b 1 (188 aa).

The helical transmembrane segment at 35 to 55 (VHFSSHFFWLAISFGFFYLFI) threads the bilayer.

Belongs to the ATPase B chain family. As to quaternary structure, F-type ATPases have 2 components, F(1) - the catalytic core - and F(0) - the membrane proton channel. F(1) has five subunits: alpha(3), beta(3), gamma(1), delta(1), epsilon(1). F(0) has three main subunits: a(1), b(2) and c(10-14). The alpha and beta chains form an alternating ring which encloses part of the gamma chain. F(1) is attached to F(0) by a central stalk formed by the gamma and epsilon chains, while a peripheral stalk is formed by the delta and b chains.

It is found in the cell inner membrane. In terms of biological role, f(1)F(0) ATP synthase produces ATP from ADP in the presence of a proton or sodium gradient. F-type ATPases consist of two structural domains, F(1) containing the extramembraneous catalytic core and F(0) containing the membrane proton channel, linked together by a central stalk and a peripheral stalk. During catalysis, ATP synthesis in the catalytic domain of F(1) is coupled via a rotary mechanism of the central stalk subunits to proton translocation. Its function is as follows. Component of the F(0) channel, it forms part of the peripheral stalk, linking F(1) to F(0). The sequence is that of ATP synthase subunit b 1 from Bartonella tribocorum (strain CIP 105476 / IBS 506).